We begin with the raw amino-acid sequence, 233 residues long: Adapter protein MecA (233 aa).

Belongs to the MecA family. In terms of assembly, homodimer.

Enables the recognition and targeting of unfolded and aggregated proteins to the ClpC protease or to other proteins involved in proteolysis. In Lactococcus lactis subsp. lactis (strain IL1403) (Streptococcus lactis), this protein is Adapter protein MecA.